A 311-amino-acid chain; its full sequence is tRNA-cytidine(32) 2-sulfurtransferase (311 aa).

The short motif at 47 to 52 is the PP-loop motif element; the sequence is SGGKDS. [4Fe-4S] cluster-binding residues include Cys122, Cys125, and Cys213.

Belongs to the TtcA family. As to quaternary structure, homodimer. Mg(2+) serves as cofactor. It depends on [4Fe-4S] cluster as a cofactor.

The protein resides in the cytoplasm. The enzyme catalyses cytidine(32) in tRNA + S-sulfanyl-L-cysteinyl-[cysteine desulfurase] + AH2 + ATP = 2-thiocytidine(32) in tRNA + L-cysteinyl-[cysteine desulfurase] + A + AMP + diphosphate + H(+). It participates in tRNA modification. In terms of biological role, catalyzes the ATP-dependent 2-thiolation of cytidine in position 32 of tRNA, to form 2-thiocytidine (s(2)C32). The sulfur atoms are provided by the cysteine/cysteine desulfurase (IscS) system. The protein is tRNA-cytidine(32) 2-sulfurtransferase of Shigella dysenteriae serotype 1 (strain Sd197).